The following is a 659-amino-acid chain: Methionine--tRNA ligase (659 aa).

A 'HIGH' region motif is present at residues 13–23 (YYPSGNLHIGH). A 'KMSKS' region motif is present at residues 308-312 (KMSKS). Lysine 311 is an ATP binding site. A tRNA-binding domain is found at 559–659 (DFDKVEIKAA…SAIPNGAVIK (101 aa)).

Belongs to the class-I aminoacyl-tRNA synthetase family. MetG type 2B subfamily. As to quaternary structure, homodimer.

The protein resides in the cytoplasm. The enzyme catalyses tRNA(Met) + L-methionine + ATP = L-methionyl-tRNA(Met) + AMP + diphosphate. In terms of biological role, is required not only for elongation of protein synthesis but also for the initiation of all mRNA translation through initiator tRNA(fMet) aminoacylation. The sequence is that of Methionine--tRNA ligase from Staphylococcus haemolyticus (strain JCSC1435).